We begin with the raw amino-acid sequence, 518 residues long: Bifunctional methyltransferase (518 aa).

The hemK stretch occupies residues 1 to 300; that stretch reads MQYSIKQILS…SHNRVIEISP (300 aa). The tract at residues 1–302 is RF MTase; it reads MQYSIKQILS…NRVIEISPIN (302 aa). S-adenosyl-L-methionine-binding positions include 140-144, aspartate 163, tryptophan 192, asparagine 207, glutamate 347, glutamate 372, asparagine 399, and aspartate 421; that span reads GTGSG. Substrate is bound at residue 207 to 210; it reads NPPY. Residues 301–518 are tRNA (guanine-N(7)-)-methyltransferase; it reads INLNRSYARR…MILQHALTDH (218 aa). Residues 305–518 form a tRNA MTase region; sequence RSYARRIGKS…MILQHALTDH (214 aa). The active site involves aspartate 421. Residues lysine 425 and aspartate 457 each contribute to the substrate site.

In the C-terminal section; belongs to the class I-like SAM-binding methyltransferase superfamily. TrmB family. This sequence in the N-terminal section; belongs to the protein N5-glutamine methyltransferase family. PrmC subfamily.

It catalyses the reaction L-glutaminyl-[peptide chain release factor] + S-adenosyl-L-methionine = N(5)-methyl-L-glutaminyl-[peptide chain release factor] + S-adenosyl-L-homocysteine + H(+). The enzyme catalyses guanosine(46) in tRNA + S-adenosyl-L-methionine = N(7)-methylguanosine(46) in tRNA + S-adenosyl-L-homocysteine. Methylates the class 1 translation termination release factors RF1/PrfA and RF2/PrfB on the glutamine residue of the universally conserved GGQ motif. Its function is as follows. Catalyzes the formation of N(7)-methylguanine at position 46 (m7G46) in tRNA. The sequence is that of Bifunctional methyltransferase (prmC/trmB) from Rickettsia prowazekii (strain Madrid E).